Here is a 199-residue protein sequence, read N- to C-terminus: FMN-dependent NADH:quinone oxidoreductase (199 aa).

Residues 17-19 and 87-90 each bind FMN; these read SNS and MYNF.

Belongs to the azoreductase type 1 family. Homodimer. The cofactor is FMN.

It carries out the reaction 2 a quinone + NADH + H(+) = 2 a 1,4-benzosemiquinone + NAD(+). The catalysed reaction is N,N-dimethyl-1,4-phenylenediamine + anthranilate + 2 NAD(+) = 2-(4-dimethylaminophenyl)diazenylbenzoate + 2 NADH + 2 H(+). Quinone reductase that provides resistance to thiol-specific stress caused by electrophilic quinones. Its function is as follows. Also exhibits azoreductase activity. Catalyzes the reductive cleavage of the azo bond in aromatic azo compounds to the corresponding amines. In Mycoplasma mycoides subsp. mycoides SC (strain CCUG 32753 / NCTC 10114 / PG1), this protein is FMN-dependent NADH:quinone oxidoreductase.